A 106-amino-acid chain; its full sequence is Flagellar transcriptional regulator FlhD (106 aa).

Belongs to the FlhD family. In terms of assembly, homodimer; disulfide-linked. Forms a heterohexamer composed of two FlhC and four FlhD subunits. Each FlhC binds a FlhD dimer, forming a heterotrimer, and a hexamer assembles by dimerization of two heterotrimers.

The protein localises to the cytoplasm. Functionally, functions in complex with FlhC as a master transcriptional regulator that regulates transcription of several flagellar and non-flagellar operons by binding to their promoter region. Activates expression of class 2 flagellar genes, including fliA, which is a flagellum-specific sigma factor that turns on the class 3 genes. Also regulates genes whose products function in a variety of physiological pathways. This chain is Flagellar transcriptional regulator FlhD, found in Burkholderia pseudomallei (strain 1710b).